A 410-amino-acid polypeptide reads, in one-letter code: Testis-specific protein TEX28 (410 aa).

The disordered stretch occupies residues 1–43; that stretch reads MVLKAEHTRSPSATLPSNVPSCRSLSSSEDGPSGPSSLADGGL. Positions 10–23 are enriched in polar residues; the sequence is SPSATLPSNVPSCR. A compositionally biased stretch (low complexity) spans 24-38; sequence SLSSSEDGPSGPSSL. Positions 93–128 form a coiled coil; that stretch reads QAFEKVNQRASATIAQIEHRLHQCHQQLQELEEGCR. The segment at 137–164 is disordered; that stretch reads ESDPANCEPPSEKALLSEPPEPGGEDGP. A coiled-coil region spans residues 185–245; that stretch reads QGTCLETEDV…LLLESLQEEK (61 aa). Residues 336–358 traverse the membrane as a helical segment; it reads LSLATVLLVFVSTLCACPSSLIS.

The protein belongs to the TEX28 family. Testis specific.

The protein localises to the membrane. In Homo sapiens (Human), this protein is Testis-specific protein TEX28 (TEX28).